The primary structure comprises 247 residues: tRNA pseudouridine synthase A (247 aa).

The Nucleophile role is filled by D53. Y111 lines the substrate pocket.

This sequence belongs to the tRNA pseudouridine synthase TruA family. As to quaternary structure, homodimer.

The enzyme catalyses uridine(38/39/40) in tRNA = pseudouridine(38/39/40) in tRNA. Its function is as follows. Formation of pseudouridine at positions 38, 39 and 40 in the anticodon stem and loop of transfer RNAs. This chain is tRNA pseudouridine synthase A, found in Bacillus subtilis (strain 168).